A 469-amino-acid chain; its full sequence is MNTNQRIITIGTICLIVGIISLLLQIGNIISLWISHSIQTREKSHPEVCNQSIITYENNTWVNQTYVNISNANIVAEQGVTSIILAGNSSLCPISGWAIYSKDNSIRIGSKGDIFVIREPFISCSHLECRTFFLTQGALLNDRHSNGTVKDRSPYRTLMSCPIGEAPSPYNSRFESVAWSASACHDGMGWLTIGISGPDNGAVAVLKYNGIITDTIKSWRNKILRTQESECVCINGSCFTIMTDGPSNGQASYKIFKMEKGRIIKSIELDAPNYHYEECSCYPDTGKVVCVCRDNWHASNRPWVSFDQNLDYQIGYICSGVFGDNPRSNDGKGNCGPVLSNGANGVKGFSFRYGNGVWIGRTKSISSRSGFEMIWDPNGWTETDSSFSMKQDIIALTDWSGYSGSFVQHPELTGMDCIRPCFWVELIRGQPKENTIWTSGSSISFCGVNSGTANWSWPDGADLPFTIDK.

The Intravirion portion of the chain corresponds to 1–6; it reads MNTNQR. Residues 7 to 27 traverse the membrane as a helical segment; that stretch reads IITIGTICLIVGIISLLLQIG. The interval 11–33 is involved in apical transport and lipid raft association; sequence GTICLIVGIISLLLQIGNIISLW. Residues 28 to 469 are Virion surface-facing; the sequence is NIISLWISHS…GADLPFTIDK (442 aa). A hypervariable stalk region region spans residues 36 to 90; the sequence is HSIQTREKSHPEVCNQSIITYENNTWVNQTYVNISNANIVAEQGVTSIILAGNSS. N-linked (GlcNAc...) asparagine; by host glycans are attached at residues asparagine 50, asparagine 58, asparagine 63, asparagine 68, and asparagine 88. Residues 91 to 469 are head of neuraminidase; the sequence is LCPISGWAIY…GADLPFTIDK (379 aa). 8 cysteine pairs are disulfide-bonded: cysteine 92–cysteine 417, cysteine 124–cysteine 129, cysteine 184–cysteine 231, cysteine 233–cysteine 238, cysteine 279–cysteine 292, cysteine 281–cysteine 290, cysteine 318–cysteine 335, and cysteine 421–cysteine 446. Arginine 118 contributes to the substrate binding site. An N-linked (GlcNAc...) asparagine; by host glycan is attached at asparagine 146. Aspartate 151 acts as the Proton donor/acceptor in catalysis. Residue arginine 152 participates in substrate binding. Asparagine 235 carries N-linked (GlcNAc...) asparagine; by host glycosylation. A substrate-binding site is contributed by 277-278; that stretch reads EE. Residue arginine 293 participates in substrate binding. Ca(2+) is bound by residues aspartate 294, aspartate 324, and asparagine 344. A substrate-binding site is contributed by arginine 368. The active-site Nucleophile is the tyrosine 402. A glycan (N-linked (GlcNAc...) asparagine; by host) is linked at asparagine 454.

Belongs to the glycosyl hydrolase 34 family. As to quaternary structure, homotetramer. It depends on Ca(2+) as a cofactor. Post-translationally, N-glycosylated.

It is found in the virion membrane. Its subcellular location is the host apical cell membrane. The catalysed reaction is Hydrolysis of alpha-(2-&gt;3)-, alpha-(2-&gt;6)-, alpha-(2-&gt;8)- glycosidic linkages of terminal sialic acid residues in oligosaccharides, glycoproteins, glycolipids, colominic acid and synthetic substrates.. With respect to regulation, inhibited by the neuraminidase inhibitors zanamivir (Relenza) and oseltamivir (Tamiflu). These drugs interfere with the release of progeny virus from infected cells and are effective against all influenza strains. Resistance to neuraminidase inhibitors is quite rare. In terms of biological role, catalyzes the removal of terminal sialic acid residues from viral and cellular glycoconjugates. Cleaves off the terminal sialic acids on the glycosylated HA during virus budding to facilitate virus release. Additionally helps virus spread through the circulation by further removing sialic acids from the cell surface. These cleavages prevent self-aggregation and ensure the efficient spread of the progeny virus from cell to cell. Otherwise, infection would be limited to one round of replication. Described as a receptor-destroying enzyme because it cleaves a terminal sialic acid from the cellular receptors. May facilitate viral invasion of the upper airways by cleaving the sialic acid moieties on the mucin of the airway epithelial cells. Likely to plays a role in the budding process through its association with lipid rafts during intracellular transport. May additionally display a raft-association independent effect on budding. Plays a role in the determination of host range restriction on replication and virulence. Sialidase activity in late endosome/lysosome traffic seems to enhance virus replication. This Aves (Human) protein is Neuraminidase.